We begin with the raw amino-acid sequence, 379 residues long: MSATLALTEQLIARASVTPDDQHCQQIMTERLAALGFECETIASHGVTNLWAVKRGADGRDGKLLAFAGHTDVVPTGPLEQWTSPPFVPAHRDGKLYGRGAADMKTSLAAFVVASEEFVAAHPGHRGAIAFLITSDEEGPATDGTVKVVELLEARGERVDYCIVGEPTSTAELGDVVKNGRRGSMSGELVVKGVQGHIAYPHLAKNPIHLLAPALAELAAEQWDAGNEYFPPTTWQVSNLHAGTGATNVIPGHADLMFNFRFSTASTVEGLQARVHAILDKHGLEYTLKWSVSGLPFLTPRGDLSNALENAIRAETGLTTELSTTGGTSDGRFIARICPQVIEFGPPNGSIHKIDEHIDVRFVDPLKNVYRRVLEQLIA.

Position 70 (H70) interacts with Zn(2+). Residue D72 is part of the active site. A Zn(2+)-binding site is contributed by D103. Residue E137 is the Proton acceptor of the active site. Residues E138, E166, and H352 each coordinate Zn(2+).

It belongs to the peptidase M20A family. DapE subfamily. Homodimer. It depends on Zn(2+) as a cofactor. Requires Co(2+) as cofactor.

It catalyses the reaction N-succinyl-(2S,6S)-2,6-diaminopimelate + H2O = (2S,6S)-2,6-diaminopimelate + succinate. It participates in amino-acid biosynthesis; L-lysine biosynthesis via DAP pathway; LL-2,6-diaminopimelate from (S)-tetrahydrodipicolinate (succinylase route): step 3/3. Its function is as follows. Catalyzes the hydrolysis of N-succinyl-L,L-diaminopimelic acid (SDAP), forming succinate and LL-2,6-diaminopimelate (DAP), an intermediate involved in the bacterial biosynthesis of lysine and meso-diaminopimelic acid, an essential component of bacterial cell walls. The protein is Succinyl-diaminopimelate desuccinylase of Burkholderia ambifaria (strain MC40-6).